Reading from the N-terminus, the 66-residue chain is MKPSEIREMSIEEIDKKIRELRLELAKERGVLTMGASMENPMVIRNLRRDIARLLTIKREKLREKR.

Belongs to the universal ribosomal protein uL29 family. In terms of assembly, part of the 50S ribosomal subunit.

In Thermococcus kodakarensis (strain ATCC BAA-918 / JCM 12380 / KOD1) (Pyrococcus kodakaraensis (strain KOD1)), this protein is Large ribosomal subunit protein uL29.